The primary structure comprises 167 residues: Aphrodisin (167 aa).

An N-terminal signal peptide occupies residues 1 to 16; the sequence is MVKILVLALVFSLAHA. Gln17 carries the post-translational modification Pyrrolidone carboxylic acid. 2 cysteine pairs are disulfide-bonded: Cys54/Cys58 and Cys73/Cys165. Residues Asn57 and Asn85 are each glycosylated (N-linked (GlcNAc...) asparagine).

Belongs to the calycin superfamily. Lipocalin family. In terms of tissue distribution, expressed in the vagina, uterus, and Bartholin's glands of female hamsters. Secreted in vaginal discharge.

It localises to the secreted. Functionally, acts as an aphrodisiac pheromone, reliably eliciting copulatory behavior from male hamster. This Mesocricetus auratus (Golden hamster) protein is Aphrodisin.